We begin with the raw amino-acid sequence, 213 residues long: Large ribosomal subunit protein uL3 (213 aa).

The disordered stretch occupies residues 131 to 155; sequence GRASHGNSVSHRAHGSTGNNQDPGR. Polar residues predominate over residues 135–152; that stretch reads HGNSVSHRAHGSTGNNQD. Gln151 carries the N5-methylglutamine modification.

This sequence belongs to the universal ribosomal protein uL3 family. Part of the 50S ribosomal subunit. Forms a cluster with proteins L14 and L19. Methylated by PrmB.

One of the primary rRNA binding proteins, it binds directly near the 3'-end of the 23S rRNA, where it nucleates assembly of the 50S subunit. In Agrobacterium fabrum (strain C58 / ATCC 33970) (Agrobacterium tumefaciens (strain C58)), this protein is Large ribosomal subunit protein uL3.